The primary structure comprises 201 residues: 3-isopropylmalate dehydratase small subunit (201 aa).

This sequence belongs to the LeuD family. LeuD type 1 subfamily. In terms of assembly, heterodimer of LeuC and LeuD.

The enzyme catalyses (2R,3S)-3-isopropylmalate = (2S)-2-isopropylmalate. The protein operates within amino-acid biosynthesis; L-leucine biosynthesis; L-leucine from 3-methyl-2-oxobutanoate: step 2/4. Its function is as follows. Catalyzes the isomerization between 2-isopropylmalate and 3-isopropylmalate, via the formation of 2-isopropylmaleate. The sequence is that of 3-isopropylmalate dehydratase small subunit from Agrobacterium fabrum (strain C58 / ATCC 33970) (Agrobacterium tumefaciens (strain C58)).